Reading from the N-terminus, the 127-residue chain is Large ribosomal subunit protein bL17 (127 aa).

Belongs to the bacterial ribosomal protein bL17 family. In terms of assembly, part of the 50S ribosomal subunit. Contacts protein L32.

The protein is Large ribosomal subunit protein bL17 of Ligilactobacillus salivarius (strain UCC118) (Lactobacillus salivarius).